A 203-amino-acid polypeptide reads, in one-letter code: MIRLFTFAIITVFLIVISRLALQRAYKYIKLNKKINNTESKTRLSIRLVSTVPYYLPLFEGLQNFGQYVLPDYPVAAIPLYKKIILPMLIFYMNHAILGLVTFFALYYVLVRNKSPIPVHQLVRFNSMQSILLFLVGSLFGAVFRAFPIEFRISFLGLMVCNMMFWFVLSTITYSIVKAVQGKYSNIPVISEAVRIQISGYST.

A run of 5 helical transmembrane segments spans residues 2 to 22, 51 to 71, 84 to 104, 131 to 151, and 153 to 173; these read IRLFTFAIITVFLIVISRLAL, TVPYYLPLFEGLQNFGQYVLP, IILPMLIFYMNHAILGLVTFF, ILLFLVGSLFGAVFRAFPIEF, and ISFLGLMVCNMMFWFVLSTIT.

Belongs to the Tic20 family.

It is found in the plastid. The protein resides in the chloroplast membrane. The chain is Tic20 family protein Ycf60 (ycf60) from Pyropia yezoensis (Susabi-nori).